A 146-amino-acid polypeptide reads, in one-letter code: 3-hydroxyacyl-[acyl-carrier-protein] dehydratase FabZ (146 aa).

The active site involves His49.

This sequence belongs to the thioester dehydratase family. FabZ subfamily.

It localises to the cytoplasm. It carries out the reaction a (3R)-hydroxyacyl-[ACP] = a (2E)-enoyl-[ACP] + H2O. Its function is as follows. Involved in unsaturated fatty acids biosynthesis. Catalyzes the dehydration of short chain beta-hydroxyacyl-ACPs and long chain saturated and unsaturated beta-hydroxyacyl-ACPs. The chain is 3-hydroxyacyl-[acyl-carrier-protein] dehydratase FabZ from Pseudomonas putida (strain ATCC 700007 / DSM 6899 / JCM 31910 / BCRC 17059 / LMG 24140 / F1).